Here is a 257-residue protein sequence, read N- to C-terminus: MSLKKSPFFELRSGSVDTLLFTVKTTDLDALRTELVKRFEATPEFFADDVVAIDVRRLADGERVALADIRQMLNDVRMRPVGVVALATQGWAGEAGLPLLEARDRRTPAAKHADEAEPAPAPVVEAAAAPAAESAQEPAPTLLHAGGRTLVIDRPLRSGQQIYAKGDLVVLAPVSHGAEIIAEGNIHIYAPLRGRALAGVHGNHDARIFCTCLEPELISIAGIYRTTENPLPAEVLGKSVQIRLEEEKLMIEPLRLT.

The protein belongs to the MinC family. Interacts with MinD and FtsZ.

In terms of biological role, cell division inhibitor that blocks the formation of polar Z ring septums. Rapidly oscillates between the poles of the cell to destabilize FtsZ filaments that have formed before they mature into polar Z rings. Prevents FtsZ polymerization. This chain is Probable septum site-determining protein MinC, found in Burkholderia lata (strain ATCC 17760 / DSM 23089 / LMG 22485 / NCIMB 9086 / R18194 / 383).